Reading from the N-terminus, the 547-residue chain is CTP synthase (547 aa).

The amidoligase domain stretch occupies residues 1–266; it reads MTKYIFVTGG…GDYLVERLGL (266 aa). Position 13 (S13) interacts with CTP. S13 lines the UTP pocket. An ATP-binding site is contributed by 14–19; it reads SVGKGI. Y54 is a binding site for L-glutamine. D71 contributes to the ATP binding site. Positions 71 and 141 each coordinate Mg(2+). CTP is bound by residues 148-150, 187-192, and K223; these read DIE and KTKPTQ. Residues 187–192 and K223 contribute to the UTP site; that span reads KTKPTQ. The 243-residue stretch at 291–533 folds into the Glutamine amidotransferase type-1 domain; that stretch reads PIALVGKYVE…IAAAAQTLLA (243 aa). Residue G353 participates in L-glutamine binding. C380 serves as the catalytic Nucleophile; for glutamine hydrolysis. Residues 381–384, E404, and R461 each bind L-glutamine; that span reads LGMQ. Residues H506 and E508 contribute to the active site.

Belongs to the CTP synthase family. In terms of assembly, homotetramer.

It catalyses the reaction UTP + L-glutamine + ATP + H2O = CTP + L-glutamate + ADP + phosphate + 2 H(+). The enzyme catalyses L-glutamine + H2O = L-glutamate + NH4(+). It carries out the reaction UTP + NH4(+) + ATP = CTP + ADP + phosphate + 2 H(+). Its pathway is pyrimidine metabolism; CTP biosynthesis via de novo pathway; CTP from UDP: step 2/2. Its activity is regulated as follows. Allosterically activated by GTP, when glutamine is the substrate; GTP has no effect on the reaction when ammonia is the substrate. The allosteric effector GTP functions by stabilizing the protein conformation that binds the tetrahedral intermediate(s) formed during glutamine hydrolysis. Inhibited by the product CTP, via allosteric rather than competitive inhibition. Its function is as follows. Catalyzes the ATP-dependent amination of UTP to CTP with either L-glutamine or ammonia as the source of nitrogen. Regulates intracellular CTP levels through interactions with the four ribonucleotide triphosphates. The sequence is that of CTP synthase from Chloroflexus aggregans (strain MD-66 / DSM 9485).